Here is a 342-residue protein sequence, read N- to C-terminus: Dihydroorotase (342 aa).

His13 and His15 together coordinate Zn(2+). Substrate is bound by residues 15–17 (HLR) and Asn41. The Zn(2+) site is built by Lys98, His135, and His173. The residue at position 98 (Lys98) is an N6-carboxylysine. His135 serves as a coordination point for substrate. Position 218 (Leu218) interacts with substrate. Asp246 contributes to the Zn(2+) binding site. Asp246 is a catalytic residue. Substrate-binding residues include His250 and Ala262.

The protein belongs to the metallo-dependent hydrolases superfamily. DHOase family. Class II DHOase subfamily. As to quaternary structure, homodimer. It depends on Zn(2+) as a cofactor.

It catalyses the reaction (S)-dihydroorotate + H2O = N-carbamoyl-L-aspartate + H(+). It functions in the pathway pyrimidine metabolism; UMP biosynthesis via de novo pathway; (S)-dihydroorotate from bicarbonate: step 3/3. Functionally, catalyzes the reversible cyclization of carbamoyl aspartate to dihydroorotate. The chain is Dihydroorotase from Aliivibrio fischeri (strain MJ11) (Vibrio fischeri).